The primary structure comprises 304 residues: Putative ankyrin repeat protein R598 (304 aa).

7 ANK repeats span residues asparagine 7–leucine 36, tyrosine 77–phenylalanine 107, glycine 122–alanine 151, histidine 152–arginine 181, alanine 183–methionine 209, asparagine 210–lysine 239, and phenylalanine 265–isoleucine 293.

This is Putative ankyrin repeat protein R598 from Acanthamoeba polyphaga (Amoeba).